The chain runs to 142 residues: Large ribosomal subunit protein uL11 (142 aa).

Belongs to the universal ribosomal protein uL11 family. As to quaternary structure, part of the ribosomal stalk of the 50S ribosomal subunit. Interacts with L10 and the large rRNA to form the base of the stalk. L10 forms an elongated spine to which L12 dimers bind in a sequential fashion forming a multimeric L10(L12)X complex. One or more lysine residues are methylated.

Forms part of the ribosomal stalk which helps the ribosome interact with GTP-bound translation factors. This chain is Large ribosomal subunit protein uL11, found in Edwardsiella ictaluri (strain 93-146).